A 118-amino-acid chain; its full sequence is Small ribosomal subunit protein uS13 (118 aa).

A disordered region spans residues 92 to 118 (RRSLPVRGQRTKTNARTRKGPRKPIKK).

Belongs to the universal ribosomal protein uS13 family. In terms of assembly, part of the 30S ribosomal subunit. Forms a loose heterodimer with protein S19. Forms two bridges to the 50S subunit in the 70S ribosome.

Its function is as follows. Located at the top of the head of the 30S subunit, it contacts several helices of the 16S rRNA. In the 70S ribosome it contacts the 23S rRNA (bridge B1a) and protein L5 of the 50S subunit (bridge B1b), connecting the 2 subunits; these bridges are implicated in subunit movement. Contacts the tRNAs in the A and P-sites. This chain is Small ribosomal subunit protein uS13, found in Acinetobacter baylyi (strain ATCC 33305 / BD413 / ADP1).